A 322-amino-acid polypeptide reads, in one-letter code: Quinolinate synthase (322 aa).

Iminosuccinate contacts are provided by His-37 and Ser-54. Cys-99 contributes to the [4Fe-4S] cluster binding site. Residues 125 to 127 and Ser-142 each bind iminosuccinate; that span reads YIN. Cys-185 contacts [4Fe-4S] cluster. Iminosuccinate contacts are provided by residues 211–213 and Thr-228; that span reads HPE. Residue Cys-278 coordinates [4Fe-4S] cluster.

This sequence belongs to the quinolinate synthase family. Type 2 subfamily. [4Fe-4S] cluster is required as a cofactor.

It localises to the cytoplasm. It carries out the reaction iminosuccinate + dihydroxyacetone phosphate = quinolinate + phosphate + 2 H2O + H(+). The protein operates within cofactor biosynthesis; NAD(+) biosynthesis; quinolinate from iminoaspartate: step 1/1. Its function is as follows. Catalyzes the condensation of iminoaspartate with dihydroxyacetone phosphate to form quinolinate. This chain is Quinolinate synthase, found in Chlorobaculum parvum (strain DSM 263 / NCIMB 8327) (Chlorobium vibrioforme subsp. thiosulfatophilum).